We begin with the raw amino-acid sequence, 185 residues long: Peptidyl-tRNA hydrolase (185 aa).

Residue Y14 coordinates tRNA. Residue H19 is the Proton acceptor of the active site. TRNA is bound by residues F64, N66, and N112.

The protein belongs to the PTH family. As to quaternary structure, monomer.

Its subcellular location is the cytoplasm. It carries out the reaction an N-acyl-L-alpha-aminoacyl-tRNA + H2O = an N-acyl-L-amino acid + a tRNA + H(+). Its function is as follows. Hydrolyzes ribosome-free peptidyl-tRNAs (with 1 or more amino acids incorporated), which drop off the ribosome during protein synthesis, or as a result of ribosome stalling. Functionally, catalyzes the release of premature peptidyl moieties from peptidyl-tRNA molecules trapped in stalled 50S ribosomal subunits, and thus maintains levels of free tRNAs and 50S ribosomes. This is Peptidyl-tRNA hydrolase from Lacticaseibacillus casei (strain BL23) (Lactobacillus casei).